The chain runs to 128 residues: Aspartate 1-decarboxylase (128 aa).

The active-site Schiff-base intermediate with substrate; via pyruvic acid is S25. S25 bears the Pyruvic acid (Ser) mark. T57 contacts substrate. The active-site Proton donor is Y58. 73-75 lines the substrate pocket; sequence GSA.

Belongs to the PanD family. Heterooctamer of four alpha and four beta subunits. Requires pyruvate as cofactor. Is synthesized initially as an inactive proenzyme, which is activated by self-cleavage at a specific serine bond to produce a beta-subunit with a hydroxyl group at its C-terminus and an alpha-subunit with a pyruvoyl group at its N-terminus.

The protein resides in the cytoplasm. It carries out the reaction L-aspartate + H(+) = beta-alanine + CO2. The protein operates within cofactor biosynthesis; (R)-pantothenate biosynthesis; beta-alanine from L-aspartate: step 1/1. Functionally, catalyzes the pyruvoyl-dependent decarboxylation of aspartate to produce beta-alanine. The protein is Aspartate 1-decarboxylase of Burkholderia ambifaria (strain ATCC BAA-244 / DSM 16087 / CCUG 44356 / LMG 19182 / AMMD) (Burkholderia cepacia (strain AMMD)).